We begin with the raw amino-acid sequence, 152 residues long: Proteolipid protein 2 (152 aa).

The 119-residue stretch at 19–137 (FSRTRKGILL…DAYFTFPLRQ (119 aa)) folds into the MARVEL domain. 3 consecutive transmembrane segments (helical) span residues 25–45 (GILL…FSAG), 48–68 (GYSS…VIYM), and 85–105 (FFRT…VLVE). Asn108 carries an N-linked (GlcNAc...) asparagine glycan. The chain crosses the membrane as a helical span at residues 112–132 (IAAGVLGLLATCLFGYDAYFT).

The protein localises to the membrane. Functionally, may play a role in cell differentiation in the intestinal epithelium. The protein is Proteolipid protein 2 (PLP2) of Oryctolagus cuniculus (Rabbit).